We begin with the raw amino-acid sequence, 87 residues long: Polyketide-8 synthase acyl carrier protein 2 (87 aa).

The 76-residue stretch at 8-83 folds into the Carrier domain; the sequence is ALDKEQLREL…GTYELLTSKL (76 aa). An O-(pantetheine 4'-phosphoryl)serine modification is found at serine 43.

In terms of processing, 4'-phosphopantetheine is transferred from CoA to a specific serine of the apo-ACP-like protein.

Functionally, acyl carrier protein. The chain is Polyketide-8 synthase acyl carrier protein 2 from Streptomyces avermitilis (strain ATCC 31267 / DSM 46492 / JCM 5070 / NBRC 14893 / NCIMB 12804 / NRRL 8165 / MA-4680).